A 255-amino-acid chain; its full sequence is tRNA pseudouridine synthase A (255 aa).

Catalysis depends on D52, which acts as the Nucleophile. Y111 contacts substrate.

This sequence belongs to the tRNA pseudouridine synthase TruA family. In terms of assembly, homodimer.

It catalyses the reaction uridine(38/39/40) in tRNA = pseudouridine(38/39/40) in tRNA. Its function is as follows. Formation of pseudouridine at positions 38, 39 and 40 in the anticodon stem and loop of transfer RNAs. The chain is tRNA pseudouridine synthase A from Cereibacter sphaeroides (strain ATCC 17023 / DSM 158 / JCM 6121 / CCUG 31486 / LMG 2827 / NBRC 12203 / NCIMB 8253 / ATH 2.4.1.) (Rhodobacter sphaeroides).